A 291-amino-acid polypeptide reads, in one-letter code: Prepilin leader peptidase/N-methyltransferase (291 aa).

The chain crosses the membrane as a helical span at residues 14-34; sequence LYFSLVFLFSLMIGSFLNVVI. The Zn(2+) site is built by Cys75, Cys78, Cys100, and Cys103. The next 6 helical transmembrane spans lie at 107–127, 131–151, 162–182, 186–206, 232–252, and 262–282; these read ISARYPLVELLTALLSVVVAM, PGWGTLAALLLTWVLVALTFI, LTLPLLWGGLLFNLLGGYVPL, VIGAMAGYLVLWSLYWAFKLL, LPIVLLLSSLVGAIFGIGLIL, and IPFGPYLAIAGWIALLWGDSI.

It belongs to the peptidase A24 family. Zn(2+) is required as a cofactor.

The protein localises to the cell inner membrane. It carries out the reaction Typically cleaves a -Gly-|-Phe- bond to release an N-terminal, basic peptide of 5-8 residues from type IV prepilin, and then N-methylates the new N-terminal amino group, the methyl donor being S-adenosyl-L-methionine.. Its function is as follows. Plays an essential role in type IV pili and type II pseudopili formation by proteolytically removing the leader sequence from substrate proteins and subsequently monomethylating the alpha-amino group of the newly exposed N-terminal phenylalanine. This is Prepilin leader peptidase/N-methyltransferase (tapD) from Aeromonas salmonicida (strain A449).